Consider the following 339-residue polypeptide: Small ribosomal subunit biogenesis GTPase RsgA (339 aa).

A CP-type G domain is found at 111-271 (MRGLLKPVAA…LIDSPGIREF (161 aa)). GTP contacts are provided by residues 159–162 (NKAD) and 213–221 (GQSGVGKSS). 4 residues coordinate Zn(2+): Cys295, Cys300, His302, and Cys308.

This sequence belongs to the TRAFAC class YlqF/YawG GTPase family. RsgA subfamily. In terms of assembly, monomer. Associates with 30S ribosomal subunit, binds 16S rRNA. Requires Zn(2+) as cofactor.

Its subcellular location is the cytoplasm. In terms of biological role, one of several proteins that assist in the late maturation steps of the functional core of the 30S ribosomal subunit. Helps release RbfA from mature subunits. May play a role in the assembly of ribosomal proteins into the subunit. Circularly permuted GTPase that catalyzes slow GTP hydrolysis, GTPase activity is stimulated by the 30S ribosomal subunit. The chain is Small ribosomal subunit biogenesis GTPase RsgA from Pseudomonas aeruginosa (strain LESB58).